The sequence spans 1292 residues: Calcium-transporting ATPase 2 (1292 aa).

The segment at 1–105 is disordered; it reads MPTYNDDDDS…EQASSKSSTS (105 aa). Over 1–236 the chain is Cytoplasmic; it reads MPTYNDDDDS…RLMLEAFKDK (236 aa). A compositionally biased stretch (polar residues) spans 23–41; sequence KPSSSQFLGVPSSNYNQRE. The segment covering 44–60 has biased composition (low complexity); that stretch reads SRSGSSTISREPSSSGT. A compositionally biased stretch (basic and acidic residues) spans 68–78; it reads DSMKESYDKNK. The helical transmembrane segment at 237 to 257 threads the bilayer; the sequence is VLILLSIAAVVSLALGLYQTF. Residues 258–273 lie on the Vacuolar side of the membrane; the sequence is GQPPTLDPITGKPEPR. The helical transmembrane segment at 274–294 threads the bilayer; it reads VEWVEGVAIMAAIVIVVTVGG. Residues 295–448 lie on the Cytoplasmic side of the membrane; that stretch reads VNDWQKELQF…QLRLSRVADA (154 aa). The chain crosses the membrane as a helical span at residues 449-469; sequence IAKLGGAASALLFIVLLIEFL. The Vacuolar portion of the chain corresponds to 470–488; it reads VRLKSNDSSSKNKGQEFLQ. The chain crosses the membrane as a helical span at residues 489-509; the sequence is ILIVSVTLLVVAVPEGLPLAV. Ca(2+) contacts are provided by Val498 and Glu503. Over 510 to 938 the chain is Cytoplasmic; that stretch reads TLALAFATNR…GRTVNDAVKK (429 aa). Asp545 (4-aspartylphosphate intermediate) is an active-site residue. Asp545 and Thr547 together coordinate Mg(2+). Residues Thr547, Glu638, Lys691, Arg736, 807 to 809, Arg856, and Lys862 contribute to the ATP site; that span reads TGD. Asp881 lines the Mg(2+) pocket. Asn884 is a binding site for ATP. The helical transmembrane segment at 939 to 959 threads the bilayer; that stretch reads FLQFQITVNITAVFLTIISAV. Asn947 contributes to the Ca(2+) binding site. The Vacuolar segment spans residues 960–966; that stretch reads ASTDQSS. The chain crosses the membrane as a helical span at residues 967-987; it reads VLTAVQLLWVNLIMDTLAALA. Ca(2+)-binding residues include Asn977 and Asp981. At 988 to 1016 the chain is on the cytoplasmic side; that stretch reads LATDPPTPEVLKRKPEKPGASLFTFDMWK. The helical transmembrane segment at 1017–1037 threads the bilayer; the sequence is MIICQSMYQLAVTLVLHFAGN. The Vacuolar segment spans residues 1038-1084; the sequence is SIFHYPSNTADMNTIVFNTFVWLQLFNEINNRRLDNKLNIFERINHN. Residues 1085-1105 form a helical membrane-spanning segment; that stretch reads FLFIAIFVIVAGIQVIIVFFG. Residues 1106 to 1115 are Cytoplasmic-facing; the sequence is GAAFSVKRID. Residues 1116–1136 form a helical membrane-spanning segment; sequence GKGWAISIVFGVISIPLGALI. The Vacuolar portion of the chain corresponds to 1137–1292; that stretch reads RCVPNNFLRK…ALDKKSSNVH (156 aa).

Belongs to the cation transport ATPase (P-type) (TC 3.A.3) family.

Its subcellular location is the vacuole membrane. The catalysed reaction is Ca(2+)(in) + ATP + H2O = Ca(2+)(out) + ADP + phosphate + H(+). Its function is as follows. This magnesium-dependent enzyme catalyzes the hydrolysis of ATP coupled with the transport of calcium. Transports the calcium to the vacuole and participates in the control of the cytosolic free calcium. This chain is Calcium-transporting ATPase 2 (pmc1), found in Schizosaccharomyces pombe (strain 972 / ATCC 24843) (Fission yeast).